Consider the following 362-residue polypeptide: Cyclic di-GMP phosphodiesterase PdeL (362 aa).

Residues 18–83 (HLSLPGSVSE…TFWRDIFFQY (66 aa)) form the HTH luxR-type domain. Residues 42 to 61 (VTEISQYRNRSAKTISHQKK) constitute a DNA-binding region (H-T-H motif). Residues 106-360 (HIVTPEAISL…KFISEWVMKA (255 aa)) enclose the EAL domain. Q127 contacts substrate. E141 contributes to the Mg(2+) binding site. Substrate is bound by residues 144–145 (VR) and N200. 3 residues coordinate Mg(2+): N200, E232, and D262. Substrate is bound by residues D262, K286, 319 to 322 (EGVE), and Y341.

In terms of assembly, is in a fast thermodynamic monomer-homodimer equilibrium. Dimerization is required for PDE activity. Dimerization affinity is increased about 100-fold upon substrate binding. Mg(2+) serves as cofactor. It depends on Mn(2+) as a cofactor.

It carries out the reaction 3',3'-c-di-GMP + H2O = 5'-phosphoguanylyl(3'-&gt;5')guanosine + H(+). Strongly inhibited by Ca(2+). In terms of biological role, acts both as an enzyme and as a c-di-GMP sensor to couple transcriptional activity to the c-di-GMP status of the cell. Phosphodiesterase (PDE) that catalyzes the hydrolysis of cyclic-di-GMP (c-di-GMP) to 5'-pGpG. Also acts as a transcription factor to control its own expression. The protein is Cyclic di-GMP phosphodiesterase PdeL of Escherichia coli (strain K12).